A 197-amino-acid chain; its full sequence is Na(+)-translocating NADH-quinone reductase subunit E (197 aa).

The next 6 membrane-spanning stretches (helical) occupy residues 11-31 (SVFI…FLAV), 35-55 (VSTA…SVPV), 76-96 (FLKF…LEMF), 108-128 (LGIY…VSFM), 139-159 (VVYG…LAGI), and 175-195 (LGIT…FSGI).

The protein belongs to the NqrDE/RnfAE family. Composed of six subunits; NqrA, NqrB, NqrC, NqrD, NqrE and NqrF.

It is found in the cell inner membrane. The enzyme catalyses a ubiquinone + n Na(+)(in) + NADH + H(+) = a ubiquinol + n Na(+)(out) + NAD(+). NQR complex catalyzes the reduction of ubiquinone-1 to ubiquinol by two successive reactions, coupled with the transport of Na(+) ions from the cytoplasm to the periplasm. NqrA to NqrE are probably involved in the second step, the conversion of ubisemiquinone to ubiquinol. The protein is Na(+)-translocating NADH-quinone reductase subunit E of Neisseria meningitidis serogroup C (strain 053442).